A 235-amino-acid polypeptide reads, in one-letter code: Phosphoribosylaminoimidazole-succinocarboxamide synthase (235 aa).

Belongs to the SAICAR synthetase family.

The enzyme catalyses 5-amino-1-(5-phospho-D-ribosyl)imidazole-4-carboxylate + L-aspartate + ATP = (2S)-2-[5-amino-1-(5-phospho-beta-D-ribosyl)imidazole-4-carboxamido]succinate + ADP + phosphate + 2 H(+). It participates in purine metabolism; IMP biosynthesis via de novo pathway; 5-amino-1-(5-phospho-D-ribosyl)imidazole-4-carboxamide from 5-amino-1-(5-phospho-D-ribosyl)imidazole-4-carboxylate: step 1/2. The polypeptide is Phosphoribosylaminoimidazole-succinocarboxamide synthase (Thermococcus kodakarensis (strain ATCC BAA-918 / JCM 12380 / KOD1) (Pyrococcus kodakaraensis (strain KOD1))).